The primary structure comprises 318 residues: Protein OPG137 (318 aa).

Residues valine 145 to serine 172 are a coiled coil.

Belongs to the orthopoxvirus OPG137 family. Homomultimer. Interacts with OPG160. Post-translationally, phosphorylated by a OPG054-independent mechanism.

It is found in the host cytoplasm. In terms of biological role, required for viral crescent formation early during virus morphogenesis. This Vaccinia virus (strain Ankara) (VACV) protein is Protein OPG137 (OPG137).